The following is a 120-amino-acid chain: Chaperonin GroEL (120 aa).

23–27 contacts ATP; it reads DGTTT.

Belongs to the chaperonin (HSP60) family. Forms a cylinder of 14 subunits composed of two heptameric rings stacked back-to-back. Interacts with the co-chaperonin GroES.

It is found in the cytoplasm. It catalyses the reaction ATP + H2O + a folded polypeptide = ADP + phosphate + an unfolded polypeptide.. Functionally, together with its co-chaperonin GroES, plays an essential role in assisting protein folding. The GroEL-GroES system forms a nano-cage that allows encapsulation of the non-native substrate proteins and provides a physical environment optimized to promote and accelerate protein folding. The chain is Chaperonin GroEL from Mycobacterium gordonae.